The sequence spans 451 residues: Chromosomal replication initiator protein DnaA (451 aa).

Residues 1–101 (MTENETIFWN…TSNHIFSRQT (101 aa)) are domain I, interacts with DnaA modulators. A domain II region spans residues 101–110 (TINSLPAITS). Residues 111–329 (DLNPKYSFDN…GALKDISLVA (219 aa)) form a domain III, AAA+ region region. ATP-binding residues include G155, G157, K158, and T159. The domain IV, binds dsDNA stretch occupies residues 330 to 451 (NFKEIDKITV…EIETIKNKIK (122 aa)).

The protein belongs to the DnaA family. Oligomerizes as a right-handed, spiral filament on DNA at oriC.

It localises to the cytoplasm. In terms of biological role, plays an essential role in the initiation and regulation of chromosomal replication. ATP-DnaA binds to the origin of replication (oriC) to initiate formation of the DNA replication initiation complex once per cell cycle. Binds the DnaA box (a 9 base pair repeat at the origin) and separates the double-stranded (ds)DNA. Forms a right-handed helical filament on oriC DNA; dsDNA binds to the exterior of the filament while single-stranded (ss)DNA is stabiized in the filament's interior. The ATP-DnaA-oriC complex binds and stabilizes one strand of the AT-rich DNA unwinding element (DUE), permitting loading of DNA polymerase. After initiation quickly degrades to an ADP-DnaA complex that is not apt for DNA replication. Binds acidic phospholipids. The sequence is that of Chromosomal replication initiator protein DnaA from Streptococcus uberis (strain ATCC BAA-854 / 0140J).